Here is a 490-residue protein sequence, read N- to C-terminus: Aspartyl/glutamyl-tRNA(Asn/Gln) amidotransferase subunit B (490 aa).

This sequence belongs to the GatB/GatE family. GatB subfamily. In terms of assembly, heterotrimer of A, B and C subunits.

The enzyme catalyses L-glutamyl-tRNA(Gln) + L-glutamine + ATP + H2O = L-glutaminyl-tRNA(Gln) + L-glutamate + ADP + phosphate + H(+). It carries out the reaction L-aspartyl-tRNA(Asn) + L-glutamine + ATP + H2O = L-asparaginyl-tRNA(Asn) + L-glutamate + ADP + phosphate + 2 H(+). In terms of biological role, allows the formation of correctly charged Asn-tRNA(Asn) or Gln-tRNA(Gln) through the transamidation of misacylated Asp-tRNA(Asn) or Glu-tRNA(Gln) in organisms which lack either or both of asparaginyl-tRNA or glutaminyl-tRNA synthetases. The reaction takes place in the presence of glutamine and ATP through an activated phospho-Asp-tRNA(Asn) or phospho-Glu-tRNA(Gln). The protein is Aspartyl/glutamyl-tRNA(Asn/Gln) amidotransferase subunit B of Symbiobacterium thermophilum (strain DSM 24528 / JCM 14929 / IAM 14863 / T).